A 488-amino-acid chain; its full sequence is C2H2-type transcription factor MSN2 (488 aa).

2 C2H2-type zinc fingers span residues 376–399 (FVCDLCNRRFRRQEHLKRHYRSLH) and 405–427 (FECNECGKKFSRSDNLAQHARTH).

The protein localises to the nucleus. It localises to the cytoplasm. Functionally, transcription factor that acts as a key downstream transcription factor in the HOG1-MAPK pathway. Plays crucial roles in the regulation of conidiation, virulence and multi-stress responses. Acts as a negative regulator of proteases, lipases, as well as of the red-pigmented oosporein production, and contributes to virulence and growth in response to external pH. Contributes to the ability to infect Rhipicephalus microplus (Acari, Ixodidae) via the cuticle-penetration requiring route involving proteolytic activity at the host cuticle. Does not seem to be involved in subsequent growth and proliferation once the tick cuticle has been breached. In Beauveria bassiana (strain ARSEF 2860) (White muscardine disease fungus), this protein is C2H2-type transcription factor MSN2.